Reading from the N-terminus, the 461-residue chain is UDP-N-acetylmuramoylalanine--D-glutamate ligase (461 aa).

117-123 provides a ligand contact to ATP; it reads GTNGKTT.

This sequence belongs to the MurCDEF family.

Its subcellular location is the cytoplasm. The catalysed reaction is UDP-N-acetyl-alpha-D-muramoyl-L-alanine + D-glutamate + ATP = UDP-N-acetyl-alpha-D-muramoyl-L-alanyl-D-glutamate + ADP + phosphate + H(+). It functions in the pathway cell wall biogenesis; peptidoglycan biosynthesis. Cell wall formation. Catalyzes the addition of glutamate to the nucleotide precursor UDP-N-acetylmuramoyl-L-alanine (UMA). The chain is UDP-N-acetylmuramoylalanine--D-glutamate ligase from Synechococcus sp. (strain CC9605).